Reading from the N-terminus, the 262-residue chain is Abhydrolase domain-containing protein ACTT2-1 (262 aa).

Residues 260-262 carry the Peroxisomal targeting signal type 1 motif; that stretch reads SKL.

It belongs to the AB hydrolase superfamily. AKT2 hydrolase family.

It is found in the peroxisome. It functions in the pathway mycotoxin biosynthesis. Its function is as follows. Abhydrolase domain-containing protein; part of the gene clusters that mediate the biosynthesis of the host-selective toxins (HSTs) ACT-toxins responsible for brown spot of tangerine disease by the tangerine pathotype which affects tangerines and mandarins. ACT-toxins consist of three moieties, 9,10-epoxy-8-hydroxy-9-methyl-decatrienoic acid (EDA), valine and a polyketide. ACT-toxin I is toxic to both citrus and pear; toxin II the 5''-deoxy derivative of ACT-toxin I, is highly toxic to pear and slightly toxic to citrus. On cellular level, ACT-toxins affect plasma membrane of susceptible cells and cause a sudden increase in loss of K(+) after a few minutes of toxin treatment. The acyl-CoA ligase ACTT1, the hydrolase ACTT2, the enoyl-CoA hydratases ACTT3 and ACTT6, and the acyl-CoA synthetase ACTT5 are all involved in the biosynthesis of the AK-, AF- and ACT-toxin common 9,10-epoxy-8-hydroxy-9-methyl-decatrienoic acid (EDA) structural moiety. The exact role of each enzyme, and of additional enzymes identified within the AF-toxin clusters have still to be determined. On the other hand, ACTTS1 to ACTTS4 are specific to the tangerine pathotype. The function of ACTTS3 is to elongate the polyketide chain portion of ACT-toxin that is unique to this toxin. The enoyl-reductase ACTTS2 might complement the missing enoyl-reductase (ER) domain in ACTTS3 in the synthesis of the polyketide portion of ACT-toxin. The roles of the nonribosomal peptide synthetases-related proteins ACTTS1 and ACTTS4 have also still not been elucidated. This Alternaria alternata (Alternaria rot fungus) protein is Abhydrolase domain-containing protein ACTT2-1.